The following is a 428-amino-acid chain: Tyrosine--tRNA ligase (428 aa).

Tyr-41 serves as a coordination point for L-tyrosine. Residues 46-55 (PTADSLHLGH) carry the 'HIGH' region motif. L-tyrosine is bound by residues Tyr-179 and Gln-183. Positions 239–243 (KFGKT) match the 'KMSKS' region motif. Residue Lys-242 coordinates ATP. The 58-residue stretch at 361–418 (ADLMQALVDSELQPSRGQARKTIASNAVTINGEKQSDPEYFFQDSDILFGRYTLLRRG) folds into the S4 RNA-binding domain.

Belongs to the class-I aminoacyl-tRNA synthetase family. TyrS type 1 subfamily. In terms of assembly, homodimer.

The protein resides in the cytoplasm. It catalyses the reaction tRNA(Tyr) + L-tyrosine + ATP = L-tyrosyl-tRNA(Tyr) + AMP + diphosphate + H(+). Catalyzes the attachment of tyrosine to tRNA(Tyr) in a two-step reaction: tyrosine is first activated by ATP to form Tyr-AMP and then transferred to the acceptor end of tRNA(Tyr). The sequence is that of Tyrosine--tRNA ligase from Citrobacter koseri (strain ATCC BAA-895 / CDC 4225-83 / SGSC4696).